Consider the following 310-residue polypeptide: Proline iminopeptidase (310 aa).

Positions 33–290 (PVIFLHGGPG…RVVQAGHRAF (258 aa)) constitute an AB hydrolase-1 domain. Ser-107 serves as the catalytic Nucleophile. Residue Asp-260 is part of the active site. The active-site Proton donor is the His-287.

The protein belongs to the peptidase S33 family.

It localises to the cytoplasm. It catalyses the reaction Release of N-terminal proline from a peptide.. Specifically catalyzes the removal of N-terminal proline residues from peptides. The protein is Proline iminopeptidase (pip) of Neisseria meningitidis serogroup A / serotype 4A (strain DSM 15465 / Z2491).